The primary structure comprises 383 residues: Putative glutamate--cysteine ligase 2-1 (383 aa).

The protein belongs to the glutamate--cysteine ligase type 2 family. YbdK subfamily.

It catalyses the reaction L-cysteine + L-glutamate + ATP = gamma-L-glutamyl-L-cysteine + ADP + phosphate + H(+). In terms of biological role, ATP-dependent carboxylate-amine ligase which exhibits weak glutamate--cysteine ligase activity. The chain is Putative glutamate--cysteine ligase 2-1 from Nocardia farcinica (strain IFM 10152).